We begin with the raw amino-acid sequence, 229 residues long: Large ribosomal subunit protein uL1 (229 aa).

Belongs to the universal ribosomal protein uL1 family. In terms of assembly, part of the 50S ribosomal subunit.

Binds directly to 23S rRNA. The L1 stalk is quite mobile in the ribosome, and is involved in E site tRNA release. In terms of biological role, protein L1 is also a translational repressor protein, it controls the translation of the L11 operon by binding to its mRNA. The polypeptide is Large ribosomal subunit protein uL1 (Flavobacterium johnsoniae (strain ATCC 17061 / DSM 2064 / JCM 8514 / BCRC 14874 / CCUG 350202 / NBRC 14942 / NCIMB 11054 / UW101) (Cytophaga johnsonae)).